Reading from the N-terminus, the 467-residue chain is NADH-quinone oxidoreductase subunit N 2 (467 aa).

The next 13 helical transmembrane spans lie at M1 to V21, V31 to G51, L66 to A86, F99 to I119, I153 to A173, A195 to F215, A231 to V253, E258 to V280, L287 to S307, A315 to I335, L357 to F377, W394 to V414, and L434 to L454.

It belongs to the complex I subunit 2 family. NDH-1 is composed of 14 different subunits. Subunits NuoA, H, J, K, L, M, N constitute the membrane sector of the complex.

The protein resides in the cell inner membrane. It catalyses the reaction a quinone + NADH + 5 H(+)(in) = a quinol + NAD(+) + 4 H(+)(out). Its function is as follows. NDH-1 shuttles electrons from NADH, via FMN and iron-sulfur (Fe-S) centers, to quinones in the respiratory chain. The immediate electron acceptor for the enzyme in this species is believed to be ubiquinone. Couples the redox reaction to proton translocation (for every two electrons transferred, four hydrogen ions are translocated across the cytoplasmic membrane), and thus conserves the redox energy in a proton gradient. The protein is NADH-quinone oxidoreductase subunit N 2 of Solidesulfovibrio magneticus (strain ATCC 700980 / DSM 13731 / RS-1) (Desulfovibrio magneticus).